The sequence spans 324 residues: Anthranilate phosphoribosyltransferase (324 aa).

5-phospho-alpha-D-ribose 1-diphosphate contacts are provided by residues Gly-72, 75–76 (GD), Ser-80, 82–85 (NVST), 99–107 (KHGNVSITS), and Ser-111. Residue Gly-72 participates in anthranilate binding. Mg(2+) is bound at residue Ser-84. Asn-102 serves as a coordination point for anthranilate. Arg-157 provides a ligand contact to anthranilate. Residues Asp-215 and Glu-216 each contribute to the Mg(2+) site.

This sequence belongs to the anthranilate phosphoribosyltransferase family. Homodimer. It depends on Mg(2+) as a cofactor.

The enzyme catalyses N-(5-phospho-beta-D-ribosyl)anthranilate + diphosphate = 5-phospho-alpha-D-ribose 1-diphosphate + anthranilate. It participates in amino-acid biosynthesis; L-tryptophan biosynthesis; L-tryptophan from chorismate: step 2/5. Functionally, catalyzes the transfer of the phosphoribosyl group of 5-phosphorylribose-1-pyrophosphate (PRPP) to anthranilate to yield N-(5'-phosphoribosyl)-anthranilate (PRA). The protein is Anthranilate phosphoribosyltransferase of Pyrococcus abyssi (strain GE5 / Orsay).